Reading from the N-terminus, the 314-residue chain is FHA domain-containing protein DDL (314 aa).

A compositionally biased stretch (low complexity) spans 1 to 10; that stretch reads MAPSSRSPSP. Positions 1 to 146 are disordered; sequence MAPSSRSPSP…NVEEDSVARM (146 aa). Positions 18-127 are enriched in basic and acidic residues; sequence ARGEKEIGRS…AIASRHDEGS (110 aa). Residue Ser133 is modified to Phosphoserine. Residues 219–282 form the FHA domain; that stretch reads YLFGRERRIA…NKTYINESPI (64 aa).

In terms of assembly, interacts with DCL1 (via N-terminus). In terms of tissue distribution, expressed in roots, lateral roots, vascular strands of roots and leaves, vegetative meristems, pollen and developing seeds.

It localises to the nucleus. Its function is as follows. Involved in the microRNA (miRNA) and short interfering RNA (siRNA) biogenesis. May facilitate DCL1 to access or recognize primary miRNAs. Binds RNA non-specifically. This is FHA domain-containing protein DDL (DDL) from Arabidopsis thaliana (Mouse-ear cress).